The chain runs to 201 residues: uncharacterized protein (201 aa).

Residues 15–122 (KNQIQFSTFN…EVLPQIRKTG (108 aa)) form the Bro-N domain.

This is an uncharacterized protein from Haemophilus influenzae (strain ATCC 51907 / DSM 11121 / KW20 / Rd).